We begin with the raw amino-acid sequence, 691 residues long: Tumor necrosis factor alpha-induced protein 2 (691 aa).

The disordered stretch occupies residues Gln-9–Leu-111. Over residues Pro-12–Arg-31 the composition is skewed to polar residues. The segment covering Thr-33–Ala-45 has biased composition (low complexity). Over residues Gln-91–Leu-107 the composition is skewed to basic and acidic residues.

It belongs to the SEC6 family.

Its function is as follows. May play a role as a mediator of inflammation and angiogenesis. The polypeptide is Tumor necrosis factor alpha-induced protein 2 (Tnfaip2) (Mus musculus (Mouse)).